A 445-amino-acid chain; its full sequence is Tubulin beta-3 chain (445 aa).

8 residues coordinate GTP: glutamine 11, glutamate 69, serine 138, glycine 142, threonine 143, glycine 144, asparagine 204, and asparagine 226. A Mg(2+)-binding site is contributed by glutamate 69. Residues 425–445 (YQDATAEEYDEEEQDGEEEHD) are disordered. A compositionally biased stretch (acidic residues) spans 429 to 445 (TAEEYDEEEQDGEEEHD).

The protein belongs to the tubulin family. In terms of assembly, dimer of alpha and beta chains. A typical microtubule is a hollow water-filled tube with an outer diameter of 25 nm and an inner diameter of 15 nM. Alpha-beta heterodimers associate head-to-tail to form protofilaments running lengthwise along the microtubule wall with the beta-tubulin subunit facing the microtubule plus end conferring a structural polarity. Microtubules usually have 13 protofilaments but different protofilament numbers can be found in some organisms and specialized cells. Mg(2+) serves as cofactor.

Its subcellular location is the cytoplasm. The protein resides in the cytoskeleton. Tubulin is the major constituent of microtubules, a cylinder consisting of laterally associated linear protofilaments composed of alpha- and beta-tubulin heterodimers. Microtubules grow by the addition of GTP-tubulin dimers to the microtubule end, where a stabilizing cap forms. Below the cap, tubulin dimers are in GDP-bound state, owing to GTPase activity of alpha-tubulin. This chain is Tubulin beta-3 chain (TUBB3), found in Zea mays (Maize).